The chain runs to 428 residues: D-alanine--D-alanine ligase (428 aa).

The ATP-grasp domain maps to 205-424 (KVVLDAAGIP…YTELITRLIE (220 aa)). Residue 237 to 299 (DAGLTYPLFV…EQGIDGREIE (63 aa)) coordinates ATP. The Mg(2+) site is built by Asp378, Glu391, and Asn393.

It belongs to the D-alanine--D-alanine ligase family. It depends on Mg(2+) as a cofactor. Mn(2+) is required as a cofactor.

It localises to the cytoplasm. The catalysed reaction is 2 D-alanine + ATP = D-alanyl-D-alanine + ADP + phosphate + H(+). The protein operates within cell wall biogenesis; peptidoglycan biosynthesis. Cell wall formation. This Bifidobacterium longum (strain NCC 2705) protein is D-alanine--D-alanine ligase.